Consider the following 364-residue polypeptide: Aminomethyltransferase (364 aa).

Belongs to the GcvT family. In terms of assembly, the glycine cleavage system is composed of four proteins: P, T, L and H.

The enzyme catalyses N(6)-[(R)-S(8)-aminomethyldihydrolipoyl]-L-lysyl-[protein] + (6S)-5,6,7,8-tetrahydrofolate = N(6)-[(R)-dihydrolipoyl]-L-lysyl-[protein] + (6R)-5,10-methylene-5,6,7,8-tetrahydrofolate + NH4(+). Functionally, the glycine cleavage system catalyzes the degradation of glycine. The polypeptide is Aminomethyltransferase (Geobacillus sp. (strain WCH70)).